The chain runs to 1077 residues: Deoxyribonuclease CdiA (1077 aa).

The interval 67–384 is FHA-2; sequence IGTSRQKTTD…DRDNYDAKQS (318 aa). Over residues 531 to 546 the composition is skewed to polar residues; the sequence is QQNVDDLSRDTGNANG. Residues 531 to 555 form a disordered region; sequence QQNVDDLSRDTGNANGSIGPIFDKE. Positions 781–784 match the VENN CT cleavage motif motif; that stretch reads VENN. Residues 954–1077 are DNase activity; that stretch reads MPWEDYVGKT…GVKVTVTQVK (124 aa).

In terms of assembly, interacts with cognate immunity protein CdiI-YPIII, which blocks its toxic DNase activity. The cofactor is Zn(2+).

It localises to the target cell. Its subcellular location is the target cell cytoplasm. Its function is as follows. Toxic component of a toxin-immunity protein module, which functions as a cellular contact-dependent growth inhibition (CDI) system. CDI modules allow bacteria to communicate with and inhibit the growth of closely related neighboring bacteria in a contact-dependent fashion. The C-terminal 123 residues (954-1077) has DNase activity in the presence of Zn(2+), converting supercoiled DNA into open-circular form. Toxic activity is neutralized by coexpression of the cognate immunity protein CdiI-YPIII, but not by non-cognate immunity proteins from other toxin-immunity modules. Expression of the DNase domain as a chimera allows bacteria to attack other non-immune bacteria which become filamentous and have lost DNA staining. In terms of biological role, the CdiA protein is thought to be exported from the cell through the central lumen of CdiB, the other half of its two-partner system (TPS). The TPS domain probably remains associated with CdiB while the FHA-1 domain forms an extended filament with the receptor-binding domain (RBD) at its extremity; in the secretion arrested state the C-terminus of the RBD and YP domains form a hairpin-like structure as the FHA-2, PT and CT domains are periplasmic. The YP domain is probably responsible for this arrest at the point where it re-enters the host cell periplasm. Upon binding to a target cell outer membrane receptor a signal is transmitted to activate secretion. The filament elongates slightly, the rest of CdiA is secreted and the FHA-2 domain becomes stably associated with the target cell's outer membrane where it facilitates entry of the toxic CT domain into the target cell periplasm. From there the toxic CT domain is cleaved and gains access to the target cell cytoplasm via an inner membrane protein. The sequence is that of Deoxyribonuclease CdiA from Yersinia pseudotuberculosis serotype O:3 (strain YPIII).